We begin with the raw amino-acid sequence, 1174 residues long: Male determiner protein Mdmd(III) (1174 aa).

Residues 1–15 (MNATDAESRKPENKP) are compositionally biased toward basic and acidic residues. 3 disordered regions span residues 1–51 (MNAT…SGQR), 80–109 (KDGSNEMLPKEDSINTNHNYTTDSNEHPVE), and 136–259 (KQLS…LRRS). Positions 16-35 (SSESSSSGSTSGSSDGEVSS) are enriched in low complexity. Residues 36 to 47 (KTYFKNNKSKVL) are compositionally biased toward polar residues. A compositionally biased stretch (basic and acidic residues) spans 80–92 (KDGSNEMLPKEDS). Over residues 93-102 (INTNHNYTTD) the composition is skewed to polar residues. Over residues 138–153 (LSAYRSRSRSTRLSYS) the composition is skewed to low complexity. Residues 167-180 (SRYKKSVLRNRRTS) are compositionally biased toward basic residues. Residues 183–200 (HGRDSSTTKRSVSRDKDN) show a composition bias toward basic and acidic residues. The span at 201–223 (RLRRRIGSSRSHTRSHSRFRRSE) shows a compositional bias: basic residues. Basic and acidic residues predominate over residues 235–259 (RSQERRHERRRSMSSDYERIALRRS). An MIF4G domain is found at 348–531 (KKYIHGYINK…KVLFQVRRDG (184 aa)). Residues 641 to 757 (ALRRTIYLTL…SWDVLDCIKL (117 aa)) form the MI domain. A compositionally biased stretch (low complexity) spans 840 to 857 (SAPSSSSSSSLSSELSAP). Disordered regions lie at residues 840 to 1045 (SAPS…SRTK) and 1096 to 1133 (KDNYGNRQNHEISQRHDSEIKRRREERKKRHHEKNHSR). Residues 869–909 (KKKHKGKNKKMTKKKNPSKKKEKTKKFVGKNKIAAKNKTIK) are compositionally biased toward basic residues. Residues 910 to 924 (RRTDKDNSSSKDNFL) are compositionally biased toward basic and acidic residues. Low complexity predominate over residues 926–957 (SESSSNESISLDSLSSELFAPSSYSSSESSND). Residues 963-1001 (KHKGKNKKMTKKKNPSNKKEKTKKKLSKNKKAPNKNTKK) show a composition bias toward basic residues. Residues 1010–1020 (SSESSISESKS) show a composition bias toward low complexity. The segment covering 1034-1045 (RKKRVTSKSRTK) has biased composition (basic residues). The segment covering 1103-1118 (QNHEISQRHDSEIKRR) has biased composition (basic and acidic residues). The span at 1119–1130 (REERKKRHHEKN) shows a compositional bias: basic residues.

It belongs to the CWC22 family. In terms of assembly, component of the spliceosome C complex.

The protein resides in the nucleus speckle. Its function is as follows. Male determiner protein (M-factor) that controls male somatic sexual differentiation. Acts as a dominant factor that regulates the mRNA splicing of transformer (tra) and doublesex (dsx) transcripts and promotes expression of male splice forms of tra and dsx. Probably acts as a component of the spliceosome C complex required for mRNA splicing factor and exon-junction complex (EJC) assembly. Hinders eIF4AIII from non-specifically binding RNA and escorts it to the splicing machinery to promote EJC assembly on mature mRNAs. This Musca domestica (House fly) protein is Male determiner protein Mdmd(III).